A 2151-amino-acid chain; its full sequence is RNA-directed RNA polymerase L (2151 aa).

Positions 36, 54, 97, 110, and 111 each coordinate Mn(2+). K124 (for endonuclease activity) is an active-site residue. The RdRp catalytic domain maps to 956–1142 (NGKFIRMKRK…SVNTEMWKSM (187 aa)). A Mg(2+)-binding site is contributed by D1099.

The protein belongs to the Bunyavirales RNA polymerase family. Interacts with the viral nucleoprotein. Mn(2+) is required as a cofactor. Requires Mg(2+) as cofactor.

It is found in the host cytoplasm. Its subcellular location is the host perinuclear region. It carries out the reaction RNA(n) + a ribonucleoside 5'-triphosphate = RNA(n+1) + diphosphate. RNA-dependent RNA polymerase, which is responsible for the replication and transcription of the viral RNA genome using antigenomic RNA as an intermediate. During transcription, synthesizes subgenomic RNAs and assures their capping by a cap-snatching mechanism, which involves the endonuclease activity cleaving the host capped pre-mRNAs. These short capped RNAs are then used as primers for viral transcription. Cleaves ssRNA substrates but not DNA. Seems to downregulate the expression of its own and heterologous mRNAs through its endonuclease activity. The chain is RNA-directed RNA polymerase L from Apodemus agrarius (Eurasian field mouse).